We begin with the raw amino-acid sequence, 392 residues long: uncharacterized protein (392 aa).

Belongs to the ROK (NagC/XylR) family.

This is an uncharacterized protein from Sinorhizobium fredii (strain NBRC 101917 / NGR234).